The chain runs to 355 residues: UPF0421 protein BCE_2776 (355 aa).

4 helical membrane-spanning segments follow: residues 19-39, 74-94, 109-129, and 131-151; these read IAVF…IFAV, FTFF…FTIV, TLTA…AFLI, and LATT…ILPP.

It belongs to the UPF0421 family.

The protein resides in the cell membrane. The protein is UPF0421 protein BCE_2776 of Bacillus cereus (strain ATCC 10987 / NRS 248).